Consider the following 172-residue polypeptide: Allergen Bos d 2 (172 aa).

A signal peptide spans 1 to 16; that stretch reads MKAVFLTLLFGLVCTA. A Pyrrolidone carboxylic acid modification is found at Q17. Disulfide bonds link C60–C64 and C79–C170.

This sequence belongs to the calycin superfamily. Lipocalin family. As to expression, found exclusively in skin. Produced in sweat glands and transported to the skin surface.

It is found in the secreted. Its function is as follows. Probable pheromone carrier. The sequence is that of Allergen Bos d 2 from Bos taurus (Bovine).